A 232-amino-acid chain; its full sequence is Large ribosomal subunit protein uL1 (232 aa).

It belongs to the universal ribosomal protein uL1 family. In terms of assembly, part of the 50S ribosomal subunit.

In terms of biological role, binds directly to 23S rRNA. The L1 stalk is quite mobile in the ribosome, and is involved in E site tRNA release. Its function is as follows. Protein L1 is also a translational repressor protein, it controls the translation of the L11 operon by binding to its mRNA. This is Large ribosomal subunit protein uL1 from Chelativorans sp. (strain BNC1).